The chain runs to 130 residues: uncharacterized protein (130 aa).

This is an uncharacterized protein from Saccharomyces cerevisiae (strain ATCC 204508 / S288c) (Baker's yeast).